Here is a 372-residue protein sequence, read N- to C-terminus: Glutamate 5-kinase (372 aa).

An ATP-binding site is contributed by Lys-14. Residues Ser-54, Asp-141, and Asn-153 each contribute to the substrate site. ATP is bound at residue 173–174 (TD). Positions 280 to 358 (RGTVVIDDGA…SQIESLLGYS (79 aa)) constitute a PUA domain.

It belongs to the glutamate 5-kinase family.

Its subcellular location is the cytoplasm. The enzyme catalyses L-glutamate + ATP = L-glutamyl 5-phosphate + ADP. Its pathway is amino-acid biosynthesis; L-proline biosynthesis; L-glutamate 5-semialdehyde from L-glutamate: step 1/2. Functionally, catalyzes the transfer of a phosphate group to glutamate to form L-glutamate 5-phosphate. In Methylibium petroleiphilum (strain ATCC BAA-1232 / LMG 22953 / PM1), this protein is Glutamate 5-kinase.